A 411-amino-acid polypeptide reads, in one-letter code: Class E basic helix-loop-helix protein 40 (411 aa).

The disordered stretch occupies residues methionine 1–leucine 20. The tract at residues methionine 1–glutamine 139 is essential for interaction with BMAL1, E-box binding and repressor activity against the CLOCK-BMAL1 heterodimer. The bHLH domain maps to threonine 52–leucine 107. The necessary for interaction with RXRA and repressor activity against RXRA stretch occupies residues leucine 75–leucine 79. An Orange domain is found at phenylalanine 142–leucine 175. A Glycyl lysine isopeptide (Lys-Gly) (interchain with G-Cter in SUMO1, SUMO2 and SUMO3) cross-link involves residue lysine 159. Residue lysine 167 forms a Glycyl lysine isopeptide (Lys-Gly) (interchain with G-Cter in SUMO2) linkage. The interval phenylalanine 227–leucine 294 is disordered. The residue at position 235 (serine 235) is a Phosphoserine. The span at glutamate 248–valine 271 shows a compositional bias: basic and acidic residues. Lysine 279 is covalently cross-linked (Glycyl lysine isopeptide (Lys-Gly) (interchain with G-Cter in SUMO1); alternate). Residue lysine 279 forms a Glycyl lysine isopeptide (Lys-Gly) (interchain with G-Cter in SUMO1, SUMO2 and SUMO3); alternate linkage. Lysine 279 participates in a covalent cross-link: Glycyl lysine isopeptide (Lys-Gly) (interchain with G-Cter in SUMO2); alternate. A Glycyl lysine isopeptide (Lys-Gly) (interchain with G-Cter in SUMO2) cross-link involves residue lysine 288. Serine 383 carries the post-translational modification Phosphoserine.

Homodimer. Heterodimer with BHLHE41/DEC2. Interacts with ubiquitin-conjugating enzyme UBE2I/UBC9. Interacts with HDAC1, SUMO1, RXRA and BMAL1. Interacts with TCF3/E47. In terms of processing, ubiquitinated; which may lead to proteasomal degradation. Sumoylation inhibits its ubiquitination and promotes its negative regulation of the CLOCK-BMAL1 heterodimer transcriptional activator activity.

The protein resides in the cytoplasm. The protein localises to the nucleus. Its function is as follows. Transcriptional repressor involved in the regulation of the circadian rhythm by negatively regulating the activity of the clock genes and clock-controlled genes. Acts as the negative limb of a novel autoregulatory feedback loop (DEC loop) which differs from the one formed by the PER and CRY transcriptional repressors (PER/CRY loop). Both these loops are interlocked as it represses the expression of PER1/2 and in turn is repressed by PER1/2 and CRY1/2. Represses the activity of the circadian transcriptional activator: CLOCK-BMAL1|BMAL2 heterodimer by competing for the binding to E-box elements (5'-CACGTG-3') found within the promoters of its target genes. Negatively regulates its own expression and the expression of DBP and BHLHE41/DEC2. Acts as a corepressor of RXR and the RXR-LXR heterodimers and represses the ligand-induced RXRA and NR1H3/LXRA transactivation activity. May function as a transcriptional factor for neuronal differentiation. Represses the transcription of NR0B2 and attentuates the transactivation of NR0B2 by the CLOCK-BMAL1 complex. Drives the circadian rhythm of blood pressure through transcriptional repression of ATP1B1 in the cardiovascular system. The protein is Class E basic helix-loop-helix protein 40 (Bhlhe40) of Mus musculus (Mouse).